The chain runs to 418 residues: L-methionine/branched-chain amino acid exporter YjeH (418 aa).

Residues 1–15 (MSGLKQELGLAQGIG) are Periplasmic-facing. A helical membrane pass occupies residues 16–36 (LLSTSLLGTGVFAVPALAALV). Over 37–41 (AGNNS) the chain is Cytoplasmic. The chain crosses the membrane as a helical span at residues 42–62 (LWAWPVLIILVFPIAIVFAIL). The Periplasmic segment spans residues 63-89 (GRHYPSAGGVAHFVGMAFGSRLERVTG). A helical membrane pass occupies residues 90–110 (WLFLSVIPVGLPAALQIAAGF). The Cytoplasmic portion of the chain corresponds to 111-113 (GQA). Residues 114–134 (MFGWHSWQLLLAELGTLALVW) traverse the membrane as a helical segment. Residues 135–147 (YIGTRGASSSANL) lie on the Periplasmic side of the membrane. Residues 148–168 (QTVIAGLIVALIVAIWWAGDI) form a helical membrane-spanning segment. Residues 169-182 (KPANIPFPAPGNIE) are Cytoplasmic-facing. The helical transmembrane segment at 183–203 (LTGLFAALSVMFWCFVGLEAF) threads the bilayer. At 204–219 (AHLASEFKNPERDFPR) the chain is on the periplasmic side. The helical transmembrane segment at 220-240 (ALMIGLLLAGLVYWGCTVVVL) threads the bilayer. The Cytoplasmic portion of the chain corresponds to 241-257 (HFDAYGEKMAAAASLPK). Residues 258–278 (IVVQLFGVGALWIACVIGYLA) traverse the membrane as a helical segment. Over 279-317 (CFASLNIYIQSFARLVWSQAQHNPDHYLARLSSRHIPNN) the chain is Periplasmic. Residues 318–338 (ALNAVLGCCVVSTLVIHALEI) form a helical membrane-spanning segment. Topologically, residues 339-341 (NLD) are cytoplasmic. The chain crosses the membrane as a helical span at residues 342-362 (ALIIYANGIFIMIYLLCMLAG). Residues 363–378 (CKLLQGRYRLLAVVGG) lie on the Periplasmic side of the membrane. The chain crosses the membrane as a helical span at residues 379–399 (LLCVLLLAMVGWKSLYALIML). The Cytoplasmic segment spans residues 400–418 (AGLWLLLPKRKTPENGITT).

The protein belongs to the amino acid-polyamine-organocation (APC) superfamily. Amino acid efflux (AAE) (TC 2.A.3.13) family.

The protein localises to the cell inner membrane. The catalysed reaction is L-methionine(in) + H(+)(out) = L-methionine(out) + H(+)(in). It carries out the reaction L-leucine(in) + H(+)(out) = L-leucine(out) + H(+)(in). The enzyme catalyses L-isoleucine(in) + H(+)(out) = L-isoleucine(out) + H(+)(in). It catalyses the reaction L-valine(in) + H(+)(out) = L-valine(out) + H(+)(in). Efflux of L-methionine is inhibited by the proton ionophore carbonyl cyanide m-chlorophenylhydrazone (CCCP). In terms of biological role, catalyzes the efflux of L-methionine, L-leucine, L-isoleucine and L-valine. Activity is dependent on electrochemical potential. In Escherichia coli (strain K12), this protein is L-methionine/branched-chain amino acid exporter YjeH (yjeH).